The primary structure comprises 670 residues: Histone-lysine N-methyltransferase, H3 lysine-9 specific SUVH1 (670 aa).

The segment at 53–140 (YPFSSSQANQ…RPISRPENMN (88 aa)) is disordered. Over residues 68–79 (NQAQYPPQHQQP) the composition is skewed to low complexity. The span at 123 to 133 (VKRRIPKKRPI) shows a compositional bias: basic residues. The 147-residue stretch at 211–357 (GIVPGVEIGD…HNTFKYKLVR (147 aa)) folds into the YDG domain. The region spanning 432-492 (FGCDCANLCK…TCKNKVTQMG (61 aa)) is the Pre-SET domain. Positions 434, 436, 440, 447, 449, 475, 479, 481, and 484 each coordinate Zn(2+). The region spanning 495 to 639 (VRLEVFKTAN…PMTELTYDYG (145 aa)) is the SET domain. S-adenosyl-L-methionine contacts are provided by residues 505-507 (RGW), Asp541, Tyr543, Arg593, and 596-597 (NH). Zn(2+) contacts are provided by Cys599, Cys658, Cys660, and Cys665. In terms of domain architecture, Post-SET spans 654 to 670 (GKRKCFCGSAYCRGSFG).

This sequence belongs to the class V-like SAM-binding methyltransferase superfamily. Histone-lysine methyltransferase family. Suvar3-9 subfamily. In terms of tissue distribution, expressed in leaves stems and flowers.

The protein localises to the nucleus. It is found in the chromosome. The protein resides in the centromere. It carries out the reaction L-lysyl(9)-[histone H3] + 2 S-adenosyl-L-methionine = N(6),N(6)-dimethyl-L-lysyl(9)-[histone H3] + 2 S-adenosyl-L-homocysteine + 2 H(+). In terms of biological role, histone methyltransferase. Methylates 'Lys-9' of histone H3. H3 'Lys-9' methylation represents a specific tag for epigenetic transcriptional repression. In Arabidopsis thaliana (Mouse-ear cress), this protein is Histone-lysine N-methyltransferase, H3 lysine-9 specific SUVH1 (SUVH1).